The primary structure comprises 488 residues: Fumarate hydratase, mitochondrial (488 aa).

The transit peptide at 1–24 directs the protein to the mitochondrion; sequence MLRFTNCSCKTFVKSSYKLNIRRM. Residues 124-126, 154-157, 164-166, and threonine 212 contribute to the substrate site; these read SGT, HPNN, and SSN. The active-site Proton donor/acceptor is histidine 213. Serine 343 is an active-site residue. Residues serine 344 and 349-351 each bind substrate; that span reads KVN. Position 428 is a phosphothreonine (threonine 428).

This sequence belongs to the class-II fumarase/aspartase family. Fumarase subfamily. As to quaternary structure, homotetramer.

It localises to the mitochondrion matrix. Its subcellular location is the cytoplasm. The protein localises to the nucleus. It carries out the reaction (S)-malate = fumarate + H2O. It functions in the pathway carbohydrate metabolism; tricarboxylic acid cycle; (S)-malate from fumarate: step 1/1. Its function is as follows. Catalyzes the reversible stereospecific interconversion of fumarate to L-malate. In mitochondrion, catalyzes the hydration of fumarate to L-malate in the tricarboxylic acid (TCA) cycle to facilitate a transition step in the production of energy in the form of NADH. In cytoplasm and nucleus, involved in DNA repair in response to DNA damage: following DNA double-strand breaks (DSBs), translocates from the cytosol to the nucleus and promotes DNA repair by catalyzing the dehydration of L-malate to fumarate. The chain is Fumarate hydratase, mitochondrial from Saccharomyces cerevisiae (strain ATCC 204508 / S288c) (Baker's yeast).